We begin with the raw amino-acid sequence, 270 residues long: Plasmanylethanolamine desaturase 1 (270 aa).

The next 3 membrane-spanning stretches (helical) occupy residues 47–67 (WCSVILCFSLIAHNLVHLLLL), 74–94 (PLVILGVVAGALIADFLSGLV), and 161–181 (ALEQLYPWECFVFCLIIFGTF). A Histidine box-1 motif is present at residues 186-190 (HKWSH). Positions 213-217 (HHRIH) match the Histidine box-2 motif.

It belongs to the fatty acid desaturase CarF family.

The protein localises to the endoplasmic reticulum membrane. The enzyme catalyses a 1-(1,2-saturated alkyl)-2-acyl-sn-glycero-3-phosphoethanolamine + 2 Fe(II)-[cytochrome b5] + O2 + 2 H(+) = a 1-O-(1Z-alkenyl)-2-acyl-sn-glycero-3-phosphoethanolamine + 2 Fe(III)-[cytochrome b5] + 2 H2O. The catalysed reaction is a 1-O-hexadecyl-2-acyl-sn-glycero-3-phosphoethanolamine + 2 Fe(II)-[cytochrome b5] + O2 + 2 H(+) = a 1-O-(1Z-hexadecenyl)-2-acyl-sn-glycero-3-phosphoethanolamine + 2 Fe(III)-[cytochrome b5] + 2 H2O. It catalyses the reaction a 1-O-octadecyl-2-acyl-sn-glycero-3-phosphoethanolamine + 2 Fe(II)-[cytochrome b5] + O2 + 2 H(+) = a 1-O-(1Z-octadecenyl)-2-acyl-sn-glycero-3-phosphoethanolamine + 2 Fe(III)-[cytochrome b5] + 2 H2O. It carries out the reaction a 1-O-(9Z-octadecenyl)-2-acyl-sn-glycero-3-phosphoethanolamine + 2 Fe(II)-[cytochrome b5] + O2 + 2 H(+) = a 1-O-(1Z,9Z-octadecadienyl)-2-acyl-sn-glycero-3-phosphoethanolamine + 2 Fe(III)-[cytochrome b5] + 2 H2O. The protein operates within lipid metabolism; fatty acid metabolism. In terms of biological role, plasmanylethanolamine desaturase involved in plasmalogen biogenesis in the endoplasmic reticulum membrane. Plasmalogens are glycerophospholipids with a hydrocarbon chain linked by a vinyl ether bond at the glycerol sn-1 position, and are involved in antioxidative and signaling mechanisms. This Homo sapiens (Human) protein is Plasmanylethanolamine desaturase 1.